Reading from the N-terminus, the 207-residue chain is Large ribosomal subunit protein uL4 (207 aa).

Residues 44–76 (RRQGTQSTKTKSEVRGGGKKPWRQKGTGRARQG) form a disordered region. Residues 60 to 71 (GGKKPWRQKGTG) are compositionally biased toward basic residues.

This sequence belongs to the universal ribosomal protein uL4 family. As to quaternary structure, part of the 50S ribosomal subunit.

One of the primary rRNA binding proteins, this protein initially binds near the 5'-end of the 23S rRNA. It is important during the early stages of 50S assembly. It makes multiple contacts with different domains of the 23S rRNA in the assembled 50S subunit and ribosome. In terms of biological role, forms part of the polypeptide exit tunnel. This Ruminiclostridium cellulolyticum (strain ATCC 35319 / DSM 5812 / JCM 6584 / H10) (Clostridium cellulolyticum) protein is Large ribosomal subunit protein uL4.